The primary structure comprises 1221 residues: MIPTSKGKNTKTQPPLSRMTRDELEDSLFRLREEHMLVKELFWKQQDEIKRMRTALLRLTASGRGLRAEAAADESSGSPLNGGGTESGGTAPSSTSVPRCPGSSCSSSAWAPLLPAAPSLASTRDTDSSTPPGHRAEKPKRESRDRLSYTAPPTFKEHVTNEKARGEVASEPSELGHLMTSDTMQVEEPPKSPEKMWSKDENFAQRSSLESTQKATELRASIKENIQLIRLKKLLHERNTSLAVTKAQLTEVQAAYETLLHKNQGILGAAHNALLSQVNELRAELKEESKKAVSLKSQMEDVSILQITLKEFQERVEDLEKERKLLNDNYDKLLESMLDSSNQPQWSHELGEQLQQKVSQLQDQLDVEMKEKREILLQLSQEKAQNKDLELEVTSLLQKHKQEVEDLQNISTFSQSPDRQSAPATHPALFQETIQIQPCEPKNQEEKKLSQMLSELQVSHAETTLELEKTRDMLILQRKINVCYQEELEAMMTKADNENKDHEAKLERLNQLLDLKNKRINQLEEQLKDVAYGTRQLPLCLKPLPAHENEDKVDISPWHQSENLFELHIHQAFLTSAALAQAGDTQPTTFCTYSFYDFETHCTPLVVGPQPLYDFTSQYVVEIDSLFLHYLQGASAQLDLHQAIASEHHTLAAGWICFDRVLETVERVHGSATLTGTGGEVFGVLEYWMRLRFPIRSSLQAYNKRKKAQAYLAANVLGAWEAQKDEPRSGTWKNQNELRVEIIRCCGLRSRSLGAQPSPYVMYRFFTFSDHDTTIIPASSNPYFRDLARFPVLVTSDLDQYLRREALSVYVFDDEDSEPGSYLGRVQVPLLPLAQNKSIQGDFNLTDPVGEPNGSVQVHLDWGSCYLPPENFPKPEAQSEEDTRDGLETSIEEEEASFPPQDQMVSIDTPTEAGQYQAKRKPPQVGERKEREHQVAGYSRRKHGRKTGLQGKNRMEYLSHNLLNGNTLQQVKYIEWKFSGLKISADHVLKNQQKEEEMTSSYSAQILKETPHPVNDKEFCEQASEGSEAQTTDSDEIVTPVSQKCPKADSEKMCIEIVSLAFYPEAEVMCDENVEQVYVEYRFYDLPLSETETPVSLRKPRAGEEIYFHFSKVIDLDPVEQKERRQFLFTMLIGEDPEQGHLKFTVVSDPIEEEKKECQEVGYAYLELWPMLVSGRDILEQDLDIVGPEDQATPIGKLKVSLQAAAALQAIYKEMTEDLCS.

2 stretches are compositionally biased toward polar residues: residues 1–15 (MIPT…TQPP) and 88–97 (GGTAPSSTSV). Disordered regions lie at residues 1-22 (MIPT…MTRD), 68-107 (AEAA…SCSS), and 119-196 (SLAS…PEKM). Composition is skewed to basic and acidic residues over residues 134–147 (HRAE…RDRL) and 155–168 (FKEH…RGEV). Residues 267–533 (LGAAHNALLS…EEQLKDVAYG (267 aa)) adopt a coiled-coil conformation. The region spanning 723–843 (QKDEPRSGTW…AQNKSIQGDF (121 aa)) is the C2 domain. A disordered region spans residues 869–947 (PENFPKPEAQ…YSRRKHGRKT (79 aa)). A compositionally biased stretch (polar residues) spans 903–914 (QMVSIDTPTEAG). An interaction with RPGR region spans residues 1027–1216 (SEAQTTDSDE…ALQAIYKEMT (190 aa)).

The protein belongs to the RPGRIP1 family. Forms homodimers and elongated homopolymers. Interacts with NPHP4. Interacts with NEK4. Interacts with RPGR. Interacts with SPATA7. Interacts with CEP290/NPHP6; mediating the association between RPGR and CEP290/NPHP6. In terms of tissue distribution, retina, brain, skeletal muscle and kidney. Colocalizes with RGPR in the outer segment of rod photoreceptors and cone outer segments.

The protein localises to the cell projection. It is found in the cilium. Functionally, may function as scaffolding protein. Required for normal location of RPGR at the connecting cilium of photoreceptor cells. Required for normal disk morphogenesis and disk organization in the outer segment of photoreceptor cells and for survival of photoreceptor cells. The protein is X-linked retinitis pigmentosa GTPase regulator-interacting protein 1 (RPGRIP1) of Bos taurus (Bovine).